The sequence spans 603 residues: Flavin-dependent halogenase chlA (603 aa).

Positions 16, 19, and 59 each coordinate FAD. Thr352 and Gly353 together coordinate chloride.

Belongs to the flavin-dependent halogenase family.

It carries out the reaction 2,4,6-trihydroxyphenylhexan-1-one + FADH2 + chloride + O2 = (3-chloro-2,4,6-trihydroxyphenyl)hexan-1-one + FAD + 2 H2O + H(+). It catalyses the reaction (3-chloro-2,4,6-trihydroxyphenyl)hexan-1-one + FADH2 + chloride + O2 = (3,5-dichloro-2,4,6-trihydroxyphenyl)hexan-1-one + FAD + 2 H2O. In terms of biological role, flavin-dependent halogenase; part of the gene cluster that mediates the biosynthesis of DIF-1 (Differentiation Inducing Factor-1), a signal molecule involved in the differentiation of pstO (prestalk-O) cells. The three-step process begins with the formation of (2,4,6-trihydroxyphenyl)-1-hexan-1-one (THPH) by the polyketide synthase StlB. THPH is then dichlorinated by the flavin-dependent halogenase ChlA. The last step of DIF-1 biosynthesis is the O-methylation of dichloro-THPH (or des-methyl-DIF-1) by the methyltransferase DmtA to yield DIF-1. This is Flavin-dependent halogenase chlA from Dictyostelium discoideum (Social amoeba).